We begin with the raw amino-acid sequence, 327 residues long: Phenylalanine--tRNA ligase alpha subunit (327 aa).

Glu-252 is a binding site for Mg(2+).

It belongs to the class-II aminoacyl-tRNA synthetase family. Phe-tRNA synthetase alpha subunit type 1 subfamily. In terms of assembly, tetramer of two alpha and two beta subunits. Mg(2+) is required as a cofactor.

The protein resides in the cytoplasm. The enzyme catalyses tRNA(Phe) + L-phenylalanine + ATP = L-phenylalanyl-tRNA(Phe) + AMP + diphosphate + H(+). The chain is Phenylalanine--tRNA ligase alpha subunit from Shigella boydii serotype 18 (strain CDC 3083-94 / BS512).